A 419-amino-acid chain; its full sequence is Tryptophan synthase beta chain (419 aa).

Residue lysine 86 is modified to N6-(pyridoxal phosphate)lysine. Over residues 394–403 the composition is skewed to basic and acidic residues; sequence VEQQKVEQQK. A disordered region spans residues 394 to 419; the sequence is VEQQKVEQQKADNQNTEKNNQESGNE. Polar residues predominate over residues 404–419; it reads ADNQNTEKNNQESGNE.

The protein belongs to the TrpB family. Tetramer of two alpha and two beta chains. Pyridoxal 5'-phosphate is required as a cofactor.

The enzyme catalyses (1S,2R)-1-C-(indol-3-yl)glycerol 3-phosphate + L-serine = D-glyceraldehyde 3-phosphate + L-tryptophan + H2O. The protein operates within amino-acid biosynthesis; L-tryptophan biosynthesis; L-tryptophan from chorismate: step 5/5. Its function is as follows. The beta subunit is responsible for the synthesis of L-tryptophan from indole and L-serine. This chain is Tryptophan synthase beta chain, found in Shewanella halifaxensis (strain HAW-EB4).